A 107-amino-acid polypeptide reads, in one-letter code: Probable insulin-like peptide beta-type 3 (107 aa).

A signal peptide spans 1 to 19 (MKLSVVLALFIIFQLGAAS). A propeptide spanning residues 20 to 55 (LMRNWMFDFEKELEHDYDDSEIGFHNIHSLMARSRR) is cleaved from the precursor. Cystine bridges form between cysteine 62-cysteine 90, cysteine 74-cysteine 103, cysteine 78-cysteine 104, and cysteine 89-cysteine 94.

The protein belongs to the insulin family.

The protein localises to the secreted. This Caenorhabditis elegans protein is Probable insulin-like peptide beta-type 3 (ins-3).